The sequence spans 620 residues: Chaperone protein HtpG (620 aa).

The segment at M1 to R334 is a; substrate-binding. Positions E335–R548 are b. Residues M549–L620 form a c region.

This sequence belongs to the heat shock protein 90 family. Homodimer.

It localises to the cytoplasm. Functionally, molecular chaperone. Has ATPase activity. This Rhodopseudomonas palustris (strain BisB18) protein is Chaperone protein HtpG.